Here is a 123-residue protein sequence, read N- to C-terminus: Small ribosomal subunit protein uS12 (123 aa).

Position 89 is a 3-methylthioaspartic acid (D89). Positions 104–123 (SVGVKDRKKSRSKYGAKRPK) are disordered. Over residues 109–123 (DRKKSRSKYGAKRPK) the composition is skewed to basic residues.

The protein belongs to the universal ribosomal protein uS12 family. As to quaternary structure, part of the 30S ribosomal subunit. Contacts proteins S8 and S17. May interact with IF1 in the 30S initiation complex.

With S4 and S5 plays an important role in translational accuracy. In terms of biological role, interacts with and stabilizes bases of the 16S rRNA that are involved in tRNA selection in the A site and with the mRNA backbone. Located at the interface of the 30S and 50S subunits, it traverses the body of the 30S subunit contacting proteins on the other side and probably holding the rRNA structure together. The combined cluster of proteins S8, S12 and S17 appears to hold together the shoulder and platform of the 30S subunit. In Geotalea daltonii (strain DSM 22248 / JCM 15807 / FRC-32) (Geobacter daltonii), this protein is Small ribosomal subunit protein uS12.